The chain runs to 139 residues: Tetra-peptide repeat homeobox-like protein (139 aa).

Disordered stretches follow at residues methionine 1–glutamine 22 and glutamate 78–glutamine 139. The segment at residues glutamine 20–arginine 79 is a DNA-binding region (homeobox). Positions glutamine 82–glutamine 139 are enriched in low complexity.

It belongs to the paired homeobox family.

The protein resides in the nucleus. In terms of biological role, transcription factor required for zygotic genome activation (ZGA), a critical event in early embryonic development during which the developmental control passes from maternally provided mRNAs to the expression of the zygotic genome after fertilization. Protein produced from maternal transcripts that binds and activates expression of key ZGA marker genes, such as NANOGNB, ZSCAN4, DUXB, KLF5 and DPPA3. Binds to regulatory DNA sequences containing a 5'-TAATCC-3' sequence motif. The protein is Tetra-peptide repeat homeobox-like protein of Homo sapiens (Human).